The chain runs to 246 residues: 1-(5-phosphoribosyl)-5-[(5-phosphoribosylamino)methylideneamino] imidazole-4-carboxamide isomerase (246 aa).

Catalysis depends on aspartate 7, which acts as the Proton acceptor. Catalysis depends on aspartate 130, which acts as the Proton donor.

The protein belongs to the HisA/HisF family.

The protein resides in the cytoplasm. It catalyses the reaction 1-(5-phospho-beta-D-ribosyl)-5-[(5-phospho-beta-D-ribosylamino)methylideneamino]imidazole-4-carboxamide = 5-[(5-phospho-1-deoxy-D-ribulos-1-ylimino)methylamino]-1-(5-phospho-beta-D-ribosyl)imidazole-4-carboxamide. The protein operates within amino-acid biosynthesis; L-histidine biosynthesis; L-histidine from 5-phospho-alpha-D-ribose 1-diphosphate: step 4/9. This is 1-(5-phosphoribosyl)-5-[(5-phosphoribosylamino)methylideneamino] imidazole-4-carboxamide isomerase from Blochmanniella pennsylvanica (strain BPEN).